Here is a 218-residue protein sequence, read N- to C-terminus: DNA ADP-ribosyl transferase (218 aa).

The region spanning 14 to 217 (ALIWRIVHRD…SVHTRSGWYF (204 aa)) is the DarT domain. NAD(+) contacts are provided by residues 18 to 20 (RIV) and R57. The NAD(+)-binding element stretch occupies residues 41-59 (QAENWINIGNPELIGKRAG). Catalysis depends on R57, which acts as the Proton acceptor. The tract at residues 123-170 (TDSHAYYNWTNYYTSLNSLDQIDWPILQARDFRRDPDDPAKFERYQAE) is ADP-ribosylating turn-turn loop. E170 is an active-site residue.

This sequence belongs to the DarT ADP-ribosyltransferase family. As to quaternary structure, interacts with cognate antitoxin DarG (via C-terminus); this heterodimeric complex neutralizes the toxic effect of DarT by preventing ssDNA binding to DarT and consequently inactivating the toxin by direct protein-protein interactions.

The enzyme catalyses a thymidine in DNA + NAD(+) = an N-(ADP-alpha-D-ribosyl)-thymidine in DNA + nicotinamide + H(+). Toxic component of the hybrid type II/IV toxin-antitoxin (TA) system DarTG, which plays a crucial role in controlling bacterial growth and bacteriophage infection. ADP-ribosylates ssDNA in the sequence TTT/TCT. In case of phage infection, DarT toxin ADP-ribosylates DNA, which inhibits both viral DNA and RNA synthesis and leads to abortive infection. Its toxic effect is neutralized by cognate antitoxin DarG. May target ssDNA loops during DNA replication, probably modifies thymidine. Wild-type protein cannot be expressed at low levels in the absence of its cognate antitoxin, but a mutant protein (G49D) can be expressed, which slows growth, rapidly inhibits DNA replication, and induces RecA expression and the SOS response. The slow growth phenotype can be suppressed by cognate antitoxin DarG. Has no activity on dsDNA in vitro. In vivo ADP-ribosylates genomic DNA (gDNA). Genetic data strongly suggests ADP-ribosylation by DarT probably generates ssDNA gaps that are repaired by the RecFOR-mediated homologous recombination pathway (RuvAB, RecG) and resolved by RuvC. In some cases these gaps probably migrate into dsDNA, where they are resolved by nucleotide excision repair (NER) detected by UvrAB, excised by UvrC, removed by UvrD, and repaired by Pol I and ligase. Other pathways may also be involved in ADP-ribosylation removal from DNA. The sequence is that of DNA ADP-ribosyl transferase from Escherichia coli O127:H6 (strain E2348/69 / EPEC).